Reading from the N-terminus, the 313-residue chain is Ribosomal RNA small subunit methyltransferase H (313 aa).

Residues 35–37, D55, F79, D101, and Q108 contribute to the S-adenosyl-L-methionine site; that span reads GGH.

Belongs to the methyltransferase superfamily. RsmH family.

It is found in the cytoplasm. The catalysed reaction is cytidine(1402) in 16S rRNA + S-adenosyl-L-methionine = N(4)-methylcytidine(1402) in 16S rRNA + S-adenosyl-L-homocysteine + H(+). Specifically methylates the N4 position of cytidine in position 1402 (C1402) of 16S rRNA. This is Ribosomal RNA small subunit methyltransferase H from Shigella sonnei (strain Ss046).